Consider the following 364-residue polypeptide: Hepatitis A virus cellular receptor 1 (364 aa).

A signal peptide spans 1–20; it reads MHPQVVILSLILHLADSVAG. Residues 21–121 enclose the Ig-like V-type domain; sequence SVKVGGEAGP…WFNDMKITVS (101 aa). Topologically, residues 21-295 are extracellular; sequence SVKVGGEAGP…SLLTANTTKG (275 aa). 3 disulfide bridges follow: Cys-36–Cys-105, Cys-46–Cys-57, and Cys-52–Cys-104. An N-linked (GlcNAc...) asparagine glycan is attached at Asn-65. Tandem repeats lie at residues 138 to 143, 144 to 149, 150 to 155, 156 to 160, 161 to 165, 166 to 171, 172 to 177, 178 to 183, 184 to 189, 190 to 195, 196 to 201, and 202 to 207. The segment at 138–207 is 12 X 6 AA approximate tandem repeats of V-P-T-T-T-T]; that stretch reads VPTVTTVRTS…TTTSVPVTTT (70 aa). The segment at 216 to 257 is disordered; it reads PLPRQNHEPVATSPSSPQPAETHPTTLQGAIRREPTSSPLYS. Positions 227 to 243 are enriched in polar residues; it reads TSPSSPQPAETHPTTLQ. 3 N-linked (GlcNAc...) asparagine glycosylation sites follow: Asn-263, Asn-277, and Asn-291. A helical transmembrane segment spans residues 296–316; that stretch reads IYAGVCISVLVLLALLGVIIA. At 317 to 364 the chain is on the cytoplasmic side; the sequence is KKYFFKKEVQQLSVSFSSLQIKALQNAVEKEVQAEDNIYIENSLYATD. Glycyl lysine isopeptide (Lys-Gly) (interchain with G-Cter in ubiquitin) cross-links involve residues Lys-338 and Lys-346.

It belongs to the immunoglobulin superfamily. TIM family. In terms of assembly, interacts with STAM. Interacts with SELPLG. (Microbial infection) Interacts with hepatitis A virus capsid proteins. As to quaternary structure, (Microbial infection) Interacts with Ebolavirus envelope glycoprotein GP. In terms of assembly, (Microbial infection) Interacts with Zika virus envelope protein E. Post-translationally, ubiquitinated at two lysine residues Lys-338 and Lys-346 on its cytoplasmic domain. Ubiquitination promotes receptor endocytosis and target receptors for lysosomal degradation and termination of receptor signaling. In terms of processing, (Microbial infection) Ubiquitination is required for Dengue virus endocytosis. As to expression, widely expressed, with highest levels in kidney and testis. Expressed by activated CD4+ T-cells during the development of helper T-cells responses.

It localises to the cell membrane. In terms of biological role, phosphatidylserine receptor that plays an important functional role in regulatory B-cells homeostasis including generation, expansion and suppressor functions. As P-selectin/SELPLG ligand, plays a specialized role in activated but not naive T-cell trafficking during inflammatory responses. Controls thereby T-cell accumulation in the inflamed central nervous system (CNS) and the induction of autoimmune disease. Also regulates expression of various anti-inflammatory cytokines and co-inhibitory ligands including IL10. Acts as a regulator of T-cell proliferation. May play a role in kidney injury and repair. Functionally, (Microbial infection) Acts as a receptor for Hepatitis A virus. (Microbial infection) Acts as a receptor for Ebolavirus and Marburg virus by binding exposed phosphatidyl-serine at the surface of virion membrane. Serves as a dual receptor for Ebolavirus by also interacting with envelope glycoprotein GP. Its function is as follows. (Microbial infection) Acts as a receptor for Dengue virus by binding exposed phosphatidyl-serine at the surface of virion membrane. TIM1 and Dengue virus are co-internalized during virus entry. In terms of biological role, (Microbial infection) Acts as a receptor for Zika virus by binding to envelope protein E. Functionally, (Microbial infection) Plays a positive role in Chikungunya virus cell entry. This chain is Hepatitis A virus cellular receptor 1 (HAVCR1), found in Homo sapiens (Human).